The following is a 494-amino-acid chain: Lysine--tRNA ligase (494 aa).

Mg(2+)-binding residues include Glu-407 and Glu-414.

This sequence belongs to the class-II aminoacyl-tRNA synthetase family. In terms of assembly, homodimer. The cofactor is Mg(2+).

The protein resides in the cytoplasm. It carries out the reaction tRNA(Lys) + L-lysine + ATP = L-lysyl-tRNA(Lys) + AMP + diphosphate. The sequence is that of Lysine--tRNA ligase from Lactococcus lactis subsp. cremoris (strain MG1363).